Consider the following 199-residue polypeptide: Recombination protein RecR (199 aa).

The C4-type zinc-finger motif lies at 56–71 (CATCGNVAQEEQCNIC). In terms of domain architecture, Toprim spans 79–174 (SVICVVEEPK…KVTRLASGLP (96 aa)).

The protein belongs to the RecR family.

May play a role in DNA repair. It seems to be involved in an RecBC-independent recombinational process of DNA repair. It may act with RecF and RecO. The sequence is that of Recombination protein RecR from Streptomyces coelicolor (strain ATCC BAA-471 / A3(2) / M145).